The following is a 370-amino-acid chain: Protein-glutamate methylesterase/protein-glutamine glutaminase of group 1 operon (370 aa).

A Response regulatory domain is found at 4–121; the sequence is KVLVVDDSGF…SRNPDKVKQL (118 aa). Asp55 carries the post-translational modification 4-aspartylphosphate. A compositionally biased stretch (low complexity) spans 150–180; the sequence is PASTFTSQAQTRPAAPARAAAPTPAASQSPA. A disordered region spans residues 150-183; the sequence is PASTFTSQAQTRPAAPARAAAPTPAASQSPAPKR. Residues 179 to 370 enclose the CheB-type methylesterase domain; the sequence is PAPKRKPYKL…IGKHLVEACV (192 aa). Catalysis depends on residues Ser194, His221, and Asp314.

It belongs to the CheB family. Post-translationally, phosphorylated by CheA. Phosphorylation of the N-terminal regulatory domain activates the methylesterase activity.

It is found in the cytoplasm. The catalysed reaction is [protein]-L-glutamate 5-O-methyl ester + H2O = L-glutamyl-[protein] + methanol + H(+). It catalyses the reaction L-glutaminyl-[protein] + H2O = L-glutamyl-[protein] + NH4(+). Its function is as follows. Involved in chemotaxis. Part of a chemotaxis signal transduction system that modulates chemotaxis in response to various stimuli. Catalyzes the demethylation of specific methylglutamate residues introduced into the chemoreceptors (methyl-accepting chemotaxis proteins or MCP) by CheR. Also mediates the irreversible deamidation of specific glutamine residues to glutamic acid. This chain is Protein-glutamate methylesterase/protein-glutamine glutaminase of group 1 operon, found in Pseudomonas putida (strain ATCC 47054 / DSM 6125 / CFBP 8728 / NCIMB 11950 / KT2440).